The primary structure comprises 338 residues: Fructose-1,6-bisphosphatase 1 (338 aa).

Ala-2 bears the N-acetylalanine mark. Residues 18–22 (VMEEG) and 28–32 (TGEMT) each bind AMP. Residues Asp-69 and Glu-98 each contribute to the Mg(2+) site. Residue 113–114 (KY) coordinates AMP. The Mg(2+) site is built by Asp-119, Leu-121, and Asp-122. Substrate is bound at residue 122–125 (DGSS). AMP is bound at residue Arg-141. Lys-151 carries the post-translational modification N6-succinyllysine. Substrate contacts are provided by residues 213 to 216 (NEGY), 244 to 249 (RYVGSM), Tyr-265, and 275 to 277 (KLR). A phosphotyrosine mark is found at Tyr-216, Tyr-245, and Tyr-265. Glu-281 is a Mg(2+) binding site.

Belongs to the FBPase class 1 family. As to quaternary structure, homotetramer. It depends on Mg(2+) as a cofactor.

The enzyme catalyses beta-D-fructose 1,6-bisphosphate + H2O = beta-D-fructose 6-phosphate + phosphate. It functions in the pathway carbohydrate biosynthesis; gluconeogenesis. Its activity is regulated as follows. Subject to complex allosteric regulation. The enzyme can assume an active R-state, or an inactive T-state. Intermediate conformations may exist. AMP acts as an allosteric inhibitor. AMP binding affects the turnover of bound substrate and not the affinity for substrate. Fructose 2,6-bisphosphate acts as a competitive inhibitor. Fructose 2,6-bisphosphate and AMP have synergistic effects. Functionally, catalyzes the hydrolysis of fructose 1,6-bisphosphate to fructose 6-phosphate in the presence of divalent cations, acting as a rate-limiting enzyme in gluconeogenesis. Plays a role in regulating glucose sensing and insulin secretion of pancreatic beta-cells. Appears to modulate glycerol gluconeogenesis in liver. Important regulator of appetite and adiposity; increased expression of the protein in liver after nutrient excess increases circulating satiety hormones and reduces appetite-stimulating neuropeptides and thus seems to provide a feedback mechanism to limit weight gain. The sequence is that of Fructose-1,6-bisphosphatase 1 (FBP1) from Oryctolagus cuniculus (Rabbit).